The sequence spans 571 residues: External alternative NAD(P)H-ubiquinone oxidoreductase B1, mitochondrial (571 aa).

The N-terminal 35 residues, Met1 to Ala35, are a transit peptide targeting the mitochondrion. Lys51 to Gln81 contacts FAD. Leu215 to Leu251 contributes to the NAD(+) binding site. The 36-residue stretch at Lys372–Arg407 folds into the EF-hand domain. Ca(2+)-binding residues include Asp385, Asp387, Ser389, Thr391, and Glu396. Positions Tyr562 to Ile571 match the Microbody targeting signal motif.

The protein belongs to the NADH dehydrogenase family. Requires FAD as cofactor. Expressed in seedlings, roots, cotyledons, leaves, stems, buds and flowers.

The protein localises to the mitochondrion inner membrane. It is found in the peroxisome. The enzyme catalyses a quinone + NADH + H(+) = a quinol + NAD(+). The catalysed reaction is a ubiquinone + NADH + H(+) = a ubiquinol + NAD(+). With respect to regulation, activity is calcium-dependent with a more pronounced effect at higher pH. Functionally, alternative NADH-ubiquinone oxidoreductase which catalyzes the oxidation of mitochondrial NADH does not translocate protons across the inner mitochondrial membrane. Calcium-dependent NAD(P)H dehydrogenase. Binds calcium ions. The protein is External alternative NAD(P)H-ubiquinone oxidoreductase B1, mitochondrial (NDB1) of Arabidopsis thaliana (Mouse-ear cress).